The sequence spans 138 residues: MAQNRFHSGTGPSQRQLRVGELIRRTLSDVLLRGDVHDPELNRHSITVGEVRTSPDLKVATAYVLPLGGHDAEEALAALRRNAGELRHLVAKAMTLKYAPQLRFVLDETFDRMDDTRRLLSEDRVRRDVESHPEDDED.

Belongs to the RbfA family. Monomer. Binds 30S ribosomal subunits, but not 50S ribosomal subunits or 70S ribosomes.

It is found in the cytoplasm. One of several proteins that assist in the late maturation steps of the functional core of the 30S ribosomal subunit. Associates with free 30S ribosomal subunits (but not with 30S subunits that are part of 70S ribosomes or polysomes). Required for efficient processing of 16S rRNA. May interact with the 5'-terminal helix region of 16S rRNA. The chain is Ribosome-binding factor A from Paracoccus denitrificans (strain Pd 1222).